The following is a 225-amino-acid chain: UPF0173 metal-dependent hydrolase Pcal_1074 (225 aa).

Belongs to the UPF0173 family.

The sequence is that of UPF0173 metal-dependent hydrolase Pcal_1074 from Pyrobaculum calidifontis (strain DSM 21063 / JCM 11548 / VA1).